Here is a 38-residue protein sequence, read N- to C-terminus: Antimicrobial peptide 1 (38 aa).

Post-translationally, disulfide bonds. As to expression, expressed in flowers but not in leaves, seeds or roots (at protein level).

Antimicrobial peptide. Active against fungal species B.cinerea (IC(50)=5.8 uM) and A.niger (IC(50)=5.6 uM) but not against F.oxysporum, F.graminearum, B.sorokinina and P.debaryanum at concentrations below 10 uM. Active against bacterial species P.syringae, B.subtilis and X.campestris. In Taraxacum officinale (Common dandelion), this protein is Antimicrobial peptide 1.